The sequence spans 242 residues: E3 ubiquitin-protein ligase ZNRF2 (242 aa).

A disordered region spans residues 1-141 (MGAKQSGPAA…VGGSPGGPRL (141 aa)). G2 carries N-myristoyl glycine lipidation. S19, S21, and S25 each carry phosphoserine. A compositionally biased stretch (low complexity) spans 19–29 (SGSDLPSSSSG). Positions 30–41 (GANGTAGGGGGA) are enriched in gly residues. Over residues 59 to 97 (PSASGGAAAAAAAPAAPAAPRSRSLGGAVGSVASGARAA) the composition is skewed to low complexity. 5 positions are modified to phosphoserine: S82, S89, S113, S116, and S135. Residues 99-118 (SPFSIPNSSSGPYGSQDSVH) show a composition bias toward polar residues. The residue at position 145 (S145) is a Phosphoserine; by MTOR. Phosphoserine occurs at positions 151 and 193. Residues 199-240 (CAICLEELQQGDTIARLPCLCIYHKGCIDEWFEVNRSCPEHP) form an RING-type; atypical zinc finger.

Interacts with UBE2N. Interacts with ZNRF1. Interacts (when phosphorylated) with YWHAE. Post-translationally, phosphorylated; leading to binding to YWHAE. Phosphorylated by MTOR at Ser-145 and dephosphorylated by PP6C. Ser-145 phosphorylation stimulates vesicle-to-cytosol translocation. Highly expressed in the brain, with higher expression during development than in adult. Expressed also in mammary glands, testis, colon and kidney.

Its subcellular location is the endosome membrane. The protein localises to the lysosome membrane. The protein resides in the presynaptic cell membrane. It localises to the cytoplasm. The enzyme catalyses S-ubiquitinyl-[E2 ubiquitin-conjugating enzyme]-L-cysteine + [acceptor protein]-L-lysine = [E2 ubiquitin-conjugating enzyme]-L-cysteine + N(6)-ubiquitinyl-[acceptor protein]-L-lysine.. Its pathway is protein modification; protein ubiquitination. Its function is as follows. E3 ubiquitin-protein ligase that plays a role in the establishment and maintenance of neuronal transmission and plasticity. Ubiquitinates the Na(+)/K(+) ATPase alpha-1 subunit/ATP1A1 and thereby influences its endocytosis and/or degradation. Acts also as a positive regulator of mTORC1 activation by amino acids, which functions upstream of the V-ATPase and of Rag-GTPases. In turn, phosphorylation by mTOR leads to its inhibition via targeting to the cytosol allowing a self-regulating feedback mechanism. This Homo sapiens (Human) protein is E3 ubiquitin-protein ligase ZNRF2 (ZNRF2).